The sequence spans 271 residues: Aminoglycoside N(3)-acetyltransferase III (271 aa).

The CoA site is built by H31, A32, S33, V34, and K35. Residues Y64, D72, and E102 each contribute to the a 2-deoxystreptamine antibiotic site. CoA-binding residues include S104, V105, and F109. A 2-deoxystreptamine antibiotic is bound by residues E123, Y146, and D170. The CoA site is built by T171 and T173. A 2-deoxystreptamine antibiotic-binding residues include H176, T212, G213, and F221.

It belongs to the antibiotic N-acetyltransferase family. As to quaternary structure, homodimer.

It carries out the reaction a 2-deoxystreptamine antibiotic + acetyl-CoA = an N(3)-acetyl-2-deoxystreptamine antibiotic + CoA + H(+). In terms of biological role, resistance to antibiotics containing the 2-deoxy-streptamine ring including dibekacin, gentamicin, kanamycin, sisomicin, tobramycin and neomycin, but not to amikacin or netilmicin. Acetylates a broad range of both 4,5- and 4,6-disubstituted aminoglycosides, including neomycin, paromomycin, ribostamycin, sisomicin, gentamicin, tobramycin and kanamycin, with no preference of one disubstitution over the other. Acetylates sisomicin and kanamycin most and least efficiently, respectively. Does not modify plazomicin. The polypeptide is Aminoglycoside N(3)-acetyltransferase III (Pseudomonas aeruginosa).